A 125-amino-acid polypeptide reads, in one-letter code: UPF0225 protein Cgl1438/cg1626 (125 aa).

The protein belongs to the UPF0225 family.

The polypeptide is UPF0225 protein Cgl1438/cg1626 (Corynebacterium glutamicum (strain ATCC 13032 / DSM 20300 / JCM 1318 / BCRC 11384 / CCUG 27702 / LMG 3730 / NBRC 12168 / NCIMB 10025 / NRRL B-2784 / 534)).